The following is a 267-amino-acid chain: Orotidine 5'-phosphate decarboxylase (267 aa).

Residues D38, K60–H62, D92–T101, Y218, and R236 each bind substrate. The active-site Proton donor is the K94.

The protein belongs to the OMP decarboxylase family.

The catalysed reaction is orotidine 5'-phosphate + H(+) = UMP + CO2. It functions in the pathway pyrimidine metabolism; UMP biosynthesis via de novo pathway; UMP from orotate: step 2/2. This chain is Orotidine 5'-phosphate decarboxylase (URA3), found in Debaryomyces hansenii (strain ATCC 36239 / CBS 767 / BCRC 21394 / JCM 1990 / NBRC 0083 / IGC 2968) (Yeast).